The sequence spans 1122 residues: Adhesin P1 (1122 aa).

The N-terminal stretch at 1 to 30 is a signal peptide; it reads MKKLIFKLSVGITPLALIGLGSFGLAVSGA. Disordered regions lie at residues 183–209, 244–273, and 544–563; these read AGDT…GGAV, DYNS…GGRT, and QNSG…NGNE. Residues 195–208 are compositionally biased toward gly residues; that stretch reads AGGGSGSSAAGGGA. A compositionally biased stretch (polar residues) spans 259–273; sequence LDSSESSESINGGRT. A helical transmembrane segment spans residues 997-1021; that stretch reads VLPVAISIPIIIIALALALGLGIGI. A disordered region spans residues 1066-1122; sequence KTPQMLQANKKDGASSPSKPSAPAAKKPTGPTKPSAPGAKPTAPAKPKAPAPTKKIE. A compositionally biased stretch (low complexity) spans 1079-1122; it reads ASSPSKPSAPAAKKPTGPTKPSAPGAKPTAPAKPKAPAPTKKIE.

This sequence belongs to the adhesin P1 family.

Its subcellular location is the cell membrane. Its function is as follows. Could be involved in cytadherence. This Mycoplasmoides gallisepticum (Mycoplasma gallisepticum) protein is Adhesin P1 (gapA).